A 245-amino-acid chain; its full sequence is Exosome complex component RRP41 (245 aa).

The residue at position 2 (Ala2) is an N-acetylalanine.

The protein belongs to the RNase PH family. As to quaternary structure, component of the RNA exosome core complex (Exo-9), composed of EXOSC1, EXOSC2, EXOSC3, EXOSC4, EXOSC5, EXOSC6, EXOSC7, EXOSC8 and EXOSC9; within the complex interacts with EXOSC2, EXOSC7 and EXOSC9. The catalytically inactive RNA exosome core complex (Exo-9) associates with the catalytic subunit EXOSC10/RRP6. Exo-9 may associate with DIS3 to form the nucleolar exosome complex, or DIS3L to form the cytoplasmic exosome complex. Exo-9 is formed by a hexameric base ring consisting of the heterodimers EXOSC4-EXOSC9, EXOSC5-EXOSC8 and EXOSC6-EXOSC7, and a cap ring consisting of EXOSC1, EXOSC2 and EXOSC3. The RNA exosome complex associates with cofactors C1D/RRP47, MPHOSPH6/MPP6 and MTREX/MTR4. Interacts with DDX60. Interacts with DIS3; the interaction is direct.

It localises to the cytoplasm. The protein resides in the nucleus. Its subcellular location is the nucleolus. The protein localises to the nucleoplasm. In terms of biological role, non-catalytic component of the RNA exosome complex which has 3'-&gt;5' exoribonuclease activity and participates in a multitude of cellular RNA processing and degradation events. In the nucleus, the RNA exosome complex is involved in proper maturation of stable RNA species such as rRNA, snRNA and snoRNA, in the elimination of RNA processing by-products and non-coding 'pervasive' transcripts, such as antisense RNA species and promoter-upstream transcripts (PROMPTs), and of mRNAs with processing defects, thereby limiting or excluding their export to the cytoplasm. The RNA exosome may be involved in Ig class switch recombination (CSR) and/or Ig variable region somatic hypermutation (SHM) by targeting AICDA deamination activity to transcribed dsDNA substrates. In the cytoplasm, the RNA exosome complex is involved in general mRNA turnover and specifically degrades inherently unstable mRNAs containing AU-rich elements (AREs) within their 3' untranslated regions, and in RNA surveillance pathways, preventing translation of aberrant mRNAs. It seems to be involved in degradation of histone mRNA. The catalytic inactive RNA exosome core complex of 9 subunits (Exo-9) is proposed to play a pivotal role in the binding and presentation of RNA for ribonucleolysis, and to serve as a scaffold for the association with catalytic subunits and accessory proteins or complexes. EXOSC4 binds to ARE-containing RNAs. This chain is Exosome complex component RRP41 (EXOSC4), found in Bos taurus (Bovine).